The following is a 153-amino-acid chain: Pro-corazonin (153 aa).

Residues 1-20 (MLRLLLLPLFLFTLSMACMG) form the signal peptide. The residue at position 21 (Q21) is a Pyrrolidone carboxylic acid. Asparagine amide is present on N31. Positions 64–153 (LERCLLQLQH…AVEPNDYGKH (90 aa)) are excised as a propeptide.

It belongs to the corazonin family. In terms of tissue distribution, expression is restricted to 24 neurons in the larval CNS (8 in the brain and 16 in the ventral nerve cord) and 12-16 neurons in the pars lateralis of the adult brain.

Its subcellular location is the secreted. In terms of biological role, cardioactive peptide. Corazonin is probably involved in the physiological regulation of the heart beat. Clock (Clk) and cycle (cyc) proteins negatively regulate Crz transcription in a cell-specific manner. This Drosophila virilis (Fruit fly) protein is Pro-corazonin (Crz).